A 664-amino-acid polypeptide reads, in one-letter code: UvrABC system protein C (664 aa).

Residues 63-141 enclose the GIY-YIG domain; the sequence is LRPGVYRMYD…IKRYRPPYNI (79 aa). The UVR domain occupies 254-289; that stretch reads THVQKKLVTAMEQASNDLNYELAAVYRDRLKALAFI.

This sequence belongs to the UvrC family. As to quaternary structure, interacts with UvrB in an incision complex.

The protein resides in the cytoplasm. In terms of biological role, the UvrABC repair system catalyzes the recognition and processing of DNA lesions. UvrC both incises the 5' and 3' sides of the lesion. The N-terminal half is responsible for the 3' incision and the C-terminal half is responsible for the 5' incision. The polypeptide is UvrABC system protein C (Zymomonas mobilis subsp. mobilis (strain ATCC 31821 / ZM4 / CP4)).